Here is a 290-residue protein sequence, read N- to C-terminus: Elongation factor Ts (290 aa).

Positions 80-83 (TDFV) are involved in Mg(2+) ion dislocation from EF-Tu.

This sequence belongs to the EF-Ts family.

It localises to the cytoplasm. In terms of biological role, associates with the EF-Tu.GDP complex and induces the exchange of GDP to GTP. It remains bound to the aminoacyl-tRNA.EF-Tu.GTP complex up to the GTP hydrolysis stage on the ribosome. This is Elongation factor Ts from Neorickettsia sennetsu (strain ATCC VR-367 / Miyayama) (Ehrlichia sennetsu).